The following is a 2671-amino-acid chain: Stalled ribosome sensor GCN1 (2671 aa).

A2 is modified (N-acetylalanine). 10 HEAT repeats span residues 140 to 178 (NKLV…ENPG), 257 to 293 (EFKD…LDLS), 294 to 331 (QYAL…QCSD), 385 to 423 (CVAE…EVPK), 425 to 459 (LTDW…GDTL), 460 to 500 (LQAL…SKLS), 560 to 597 (SKVQ…SLGG), 599 to 636 (KLAN…MGKT), 700 to 732 (AFIT…SLSV), and 733 to 772 (LSPD…PAGE). Residue S729 is modified to Phosphoserine. S786 carries the phosphoserine modification. Positions 804–865 (QIIEMELKEE…EAALGLLDAI (62 aa)) form a coiled coil. HEAT repeat units follow at residues 879-918 (VLVD…TLGT), 979-1016 (SLVF…HAQL), 1035-1072 (LPRV…SSSG), 1078-1115 (FAEQ…VLPS), 1155-1192 (DLQS…RYQR), 1210-1250 (YRPP…YLDS), 1251-1289 (SQVK…AHGK), 1290-1332 (ENVN…HLDK), 1335-1372 (PKVK…AVKE), 1374-1410 (AGGM…GLGI), 1413-1451 (LKQQ…MLGK), 1455-1492 (PYVV…NLSA), 1493-1530 (HGVK…CAPK), 1534-1571 (SCLP…VIRN), 1573-1609 (EILA…HFID), 1611-1648 (PSLA…LTDQ), 1653-1690 (PYLP…GMGE), 1692-1729 (CFED…GLGV), 1731-1769 (KLEK…TFGD), 1773-1810 (PYVG…MYAE), 1812-1848 (AIAL…HISG), 1921-1958 (EILP…KLGE), 1959-1996 (KILP…STSR), 2001-2038 (FFSE…TIGH), 2039-2074 (QALE…VKSR), 2076-2108 (VLPY…LTRH), 2111-2146 (VILP…VEDD), 2147-2184 (TGHR…RSKA), 2188-2225 (SHLR…KLDA), 2259-2296 (RGVT…LTSA), 2301-2338 (PSVV…GKVG), 2339-2380 (IALK…IHVK), 2382-2417 (DPLF…GAGS), 2422-2459 (AIRK…FLTD), 2546-2583 (QLPP…EPRP), 2588-2625 (QTIK…MRRG), and 2627-2661 (ELLQ…QADS). The RWDBD region stretch occupies residues 2260 to 2408 (GVTSILPVLR…GIRDTMLQAL (149 aa)). Phosphoserine is present on S2276.

It belongs to the GCN1 family. Interacts with EIF2AK4/GCN2; this interaction stimulates the EIF2AK4/GCN2 kinase activity and is impaired by IMPACT upon a variety of stress conditions, such as amino acid depletion, UV-C irradiation, proteasome inhibitor treatment and glucose deprivation. Interacts with IMPACT; this prevents the interaction of GCN1 with EIF2AK4/GCN2 and inhibits EIF2AK4/GCN2 kinase activity. Interacts with RNF14; interaction takes place following ribosome stalling and promotes recruitment of RNF14. As to expression, expressed in the hypothalamus, cortex and hippocampus.

The protein resides in the cytoplasm. Its function is as follows. Ribosome collision sensor that plays a key role in the RNF14-RNF25 translation quality control pathway, a pathway that takes place when a ribosome has stalled during translation, and which promotes ubiquitination and degradation of translation factors on stalled ribosomes. Directly binds to the ribosome and acts as a sentinel for colliding ribosomes: activated following ribosome stalling and promotes recruitment of RNF14, which directly ubiquitinates EEF1A1/eEF1A, leading to its degradation. In addition to EEF1A1/eEF1A, the RNF14-RNF25 translation quality control pathway mediates degradation of ETF1/eRF1 and ubiquitination of ribosomal protein. GCN1 also acts as a positive activator of the integrated stress response (ISR) by mediating activation of EIF2AK4/GCN2 in response to amino acid starvation. Interaction with EIF2AK4/GCN2 on translating ribosomes stimulates EIF2AK4/GCN2 kinase activity, leading to phosphorylation of eukaryotic translation initiation factor 2 (eIF-2-alpha/EIF2S1). EIF2S1/eIF-2-alpha phosphorylation converts EIF2S1/eIF-2-alpha into a global protein synthesis inhibitor, leading to a global attenuation of cap-dependent translation, and thus to a reduced overall utilization of amino acids, while concomitantly initiating the preferential translation of ISR-specific mRNAs, such as the transcriptional activator ATF4, and hence allowing ATF4-mediated reprogramming of amino acid biosynthetic gene expression to alleviate nutrient depletion. In Mus musculus (Mouse), this protein is Stalled ribosome sensor GCN1.